The following is a 356-amino-acid chain: 16-methoxy-2,3-dihydro-3-hydroxytabersonine synthase (356 aa).

Zn(2+) is bound by residues Cys-49, His-71, Cys-102, Cys-105, Cys-108, Cys-116, and Cys-162. 187–192 (GLGAVG) contacts NAD(+).

The protein belongs to the zinc-containing alcohol dehydrogenase family. Zn(2+) is required as a cofactor. As to expression, expressed in leaf epidermis.

It carries out the reaction (3R)-3-hydroxy-16-methoxy-2,3-dihydrotabersonine + A = (3R)-1,2-didehydro-3-hydroxy-16-methoxy-2,3-dihydrotabersonine + AH2. The catalysed reaction is (3R)-3-hydroxy-2,3-dihydrotabersonine + A = (3R)-1,2-didehydro-3-hydroxy-2,3-dihydrotabersonine + AH2. It functions in the pathway alkaloid biosynthesis; vindoline biosynthesis. Functionally, converts the unstable imine alcohols produced by CYP71D1V2/T3O into 3-hydroxy-16-methoxy-2,3-dihydrotabersonine or 3-hydroxy-2,3-dihydrotabersonine. This is 16-methoxy-2,3-dihydro-3-hydroxytabersonine synthase from Catharanthus roseus (Madagascar periwinkle).